The chain runs to 40 residues: U1-ectatotoxin-Eb1a subunit A (40 aa).

Belongs to the ectatomin family. Ectatomin-Eq subfamily. As to quaternary structure, heterodimer of subunits A and B; disulfide-linked. Expressed by the venom gland.

It is found in the secreted. The protein resides in the target cell membrane. The sequence is that of U1-ectatotoxin-Eb1a subunit A from Ectatomma brunneum (Ant).